A 428-amino-acid chain; its full sequence is Serine--tRNA ligase (428 aa).

231–233 is a binding site for L-serine; sequence TAE. Residue 262-264 participates in ATP binding; the sequence is RSE. Glu285 contacts L-serine. 349–352 is a binding site for ATP; sequence EISS. Ser385 is a binding site for L-serine.

Belongs to the class-II aminoacyl-tRNA synthetase family. Type-1 seryl-tRNA synthetase subfamily. As to quaternary structure, homodimer. The tRNA molecule binds across the dimer.

The protein localises to the cytoplasm. It carries out the reaction tRNA(Ser) + L-serine + ATP = L-seryl-tRNA(Ser) + AMP + diphosphate + H(+). The enzyme catalyses tRNA(Sec) + L-serine + ATP = L-seryl-tRNA(Sec) + AMP + diphosphate + H(+). Its pathway is aminoacyl-tRNA biosynthesis; selenocysteinyl-tRNA(Sec) biosynthesis; L-seryl-tRNA(Sec) from L-serine and tRNA(Sec): step 1/1. In terms of biological role, catalyzes the attachment of serine to tRNA(Ser). Is also able to aminoacylate tRNA(Sec) with serine, to form the misacylated tRNA L-seryl-tRNA(Sec), which will be further converted into selenocysteinyl-tRNA(Sec). This is Serine--tRNA ligase from Staphylococcus aureus (strain bovine RF122 / ET3-1).